The sequence spans 62 residues: uncharacterized protein (62 aa).

This is an uncharacterized protein from Dictyostelium discoideum (Social amoeba).